Here is a 229-residue protein sequence, read N- to C-terminus: Histone H1 (229 aa).

Disordered stretches follow at residues 1–52 (MADT…SSHP) and 125–229 (APAL…RTRK). The span at 32–45 (KEKKKVIAAKKPKS) shows a compositional bias: basic residues. The H15 domain maps to 50 to 119 (SHPSFFEMIS…KVKNSFKLPS (70 aa)). Positions 125–138 (APALAKKPTIPKPK) are enriched in low complexity. The span at 139–160 (VAAKPKTAKIGAKPKAKAKVAA) shows a compositional bias: basic residues. 2 stretches are compositionally biased toward low complexity: residues 161–177 (KTKA…PAAK) and 185–205 (KPKT…VASP). The segment covering 206–229 (GKKKAVPVKKVKTVKSPAGKRTRK) has biased composition (basic residues).

This sequence belongs to the histone H1/H5 family.

It localises to the nucleus. The protein resides in the chromosome. Histones H1 are necessary for the condensation of nucleosome chains into higher-order structures. This chain is Histone H1, found in Euphorbia esula (Leafy spurge).